A 306-amino-acid polypeptide reads, in one-letter code: D-alanine--D-alanine ligase (306 aa).

The ATP-grasp domain maps to 105–300 (KMIWQAAGIS…FDELVIQILE (196 aa)). 131-186 (TDRLGLPLIIKPAREGSTIGLNKVDYAQDMQSAYQTAAQHDSLVIAEQFIQGIELT) provides a ligand contact to ATP. Residues D254, E267, and N269 each contribute to the Mg(2+) site.

The protein belongs to the D-alanine--D-alanine ligase family. Mg(2+) is required as a cofactor. Requires Mn(2+) as cofactor.

It is found in the cytoplasm. It carries out the reaction 2 D-alanine + ATP = D-alanyl-D-alanine + ADP + phosphate + H(+). It functions in the pathway cell wall biogenesis; peptidoglycan biosynthesis. In terms of biological role, cell wall formation. In Nitrosomonas eutropha (strain DSM 101675 / C91 / Nm57), this protein is D-alanine--D-alanine ligase.